We begin with the raw amino-acid sequence, 437 residues long: uncharacterized protein (437 aa).

Residues 63-87 (PSSANVSFQNSDDNLSTSRGRSASP) are compositionally biased toward polar residues. Disordered stretches follow at residues 63–97 (PSSA…SNFP), 112–147 (VKKD…KKET), and 346–437 (PKNA…YSIW). The span at 399–409 (EALSPSKSNPD) shows a compositional bias: polar residues. The segment covering 425-437 (KKPSSSSSNYSIW) has biased composition (low complexity).

This is an uncharacterized protein from Caenorhabditis elegans.